Here is a 427-residue protein sequence, read N- to C-terminus: Enolase (427 aa).

Gln-163 contributes to the (2R)-2-phosphoglycerate binding site. Glu-205 acts as the Proton donor in catalysis. Residues Asp-242, Glu-285, and Asp-312 each contribute to the Mg(2+) site. The (2R)-2-phosphoglycerate site is built by Lys-337, Arg-366, Ser-367, and Lys-388. Lys-337 (proton acceptor) is an active-site residue.

This sequence belongs to the enolase family. Mg(2+) serves as cofactor.

It is found in the cytoplasm. The protein resides in the secreted. The protein localises to the cell surface. The catalysed reaction is (2R)-2-phosphoglycerate = phosphoenolpyruvate + H2O. It participates in carbohydrate degradation; glycolysis; pyruvate from D-glyceraldehyde 3-phosphate: step 4/5. Catalyzes the reversible conversion of 2-phosphoglycerate (2-PG) into phosphoenolpyruvate (PEP). It is essential for the degradation of carbohydrates via glycolysis. This is Enolase from Polaromonas sp. (strain JS666 / ATCC BAA-500).